We begin with the raw amino-acid sequence, 250 residues long: Cell division protein ZapD (250 aa).

It belongs to the ZapD family. In terms of assembly, interacts with FtsZ.

It localises to the cytoplasm. Cell division factor that enhances FtsZ-ring assembly. Directly interacts with FtsZ and promotes bundling of FtsZ protofilaments, with a reduction in FtsZ GTPase activity. The sequence is that of Cell division protein ZapD from Yersinia pestis bv. Antiqua (strain Antiqua).